The sequence spans 317 residues: 4-diphosphocytidyl-2-C-methyl-D-erythritol kinase (317 aa).

K11 is a catalytic residue. 99-109 (PVAAGLAGGST) lines the ATP pocket. D141 is an active-site residue.

This sequence belongs to the GHMP kinase family. IspE subfamily.

The catalysed reaction is 4-CDP-2-C-methyl-D-erythritol + ATP = 4-CDP-2-C-methyl-D-erythritol 2-phosphate + ADP + H(+). Its pathway is isoprenoid biosynthesis; isopentenyl diphosphate biosynthesis via DXP pathway; isopentenyl diphosphate from 1-deoxy-D-xylulose 5-phosphate: step 3/6. Functionally, catalyzes the phosphorylation of the position 2 hydroxy group of 4-diphosphocytidyl-2C-methyl-D-erythritol. The sequence is that of 4-diphosphocytidyl-2-C-methyl-D-erythritol kinase from Trichormus variabilis (strain ATCC 29413 / PCC 7937) (Anabaena variabilis).